The sequence spans 603 residues: Elongation factor 4 (603 aa).

The region spanning 7–189 is the tr-type G domain; the sequence is SRIRNFSIIA…AIVQQVPPPA (183 aa). Residues 19–24 and 136–139 each bind GTP; these read DHGKST and NKID.

Belongs to the TRAFAC class translation factor GTPase superfamily. Classic translation factor GTPase family. LepA subfamily.

The protein resides in the cell inner membrane. It carries out the reaction GTP + H2O = GDP + phosphate + H(+). In terms of biological role, required for accurate and efficient protein synthesis under certain stress conditions. May act as a fidelity factor of the translation reaction, by catalyzing a one-codon backward translocation of tRNAs on improperly translocated ribosomes. Back-translocation proceeds from a post-translocation (POST) complex to a pre-translocation (PRE) complex, thus giving elongation factor G a second chance to translocate the tRNAs correctly. Binds to ribosomes in a GTP-dependent manner. The protein is Elongation factor 4 of Synechocystis sp. (strain ATCC 27184 / PCC 6803 / Kazusa).